We begin with the raw amino-acid sequence, 530 residues long: Calnexin homolog 1 (530 aa).

Residues 1 to 20 (MRQRQLFSVFLLLLAFVSFQ) form the signal peptide. The Lumenal portion of the chain corresponds to 21–466 (KLCYCDDQTV…EKAEQQPNLT (446 aa)). Ca(2+) is bound by residues serine 34 and aspartate 65. Cysteines 108 and 143 form a disulfide. Residues tyrosine 112, lysine 114, tyrosine 134, and aspartate 141 each contribute to the an alpha-D-glucoside site. Residues 216–315 (ALIPAKTIPD…KCEAAPGCGE (100 aa)) are disordered. The segment at 223 to 356 (IPDPEDKKPE…RDIPNPDYFE (134 aa)) is p domain (Extended arm). Basic and acidic residues predominate over residues 224 to 240 (PDPEDKKPEDWDERAKI). A run of 5 repeats spans residues 225 to 236 (DPEDKKPEDWDE), 242 to 253 (DPNAVKPEDWDE), 261 to 272 (DEEAEKPEGWLD), 280 to 291 (DPEATKPEDWDD), and 295 to 305 (GMWEAPKIDNP). 4 X approximate repeats regions lie at residues 225–291 (DPED…DWDD) and 295–352 (GMWE…IPNP). The span at 250–281 (DWDEDAPMEIEDEEAEKPEGWLDDEPEEVDDP) shows a compositional bias: acidic residues. Residues cysteine 307 and cysteine 313 are joined by a disulfide bond. Repeat copies occupy residues 314 to 324 (GEWKRPMKRNP), 328 to 338 (GKWSSPLIDNP), and 342 to 352 (GIWKPRDIPNP). Glutamate 371 is an an alpha-D-glucoside binding site. Aspartate 382 is a binding site for Ca(2+). The N-linked (GlcNAc...) asparagine glycan is linked to asparagine 464. Residues 467–487 (IGVLVAIVVVFFSLFLKLIFG) form a helical membrane-spanning segment. The Cytoplasmic segment spans residues 488 to 530 (GKKAAAPVEKKKPEVAESSKSGDEAEKKEETAAPRKRQPRRDN). Positions 490 to 530 (KAAAPVEKKKPEVAESSKSGDEAEKKEETAAPRKRQPRRDN) are disordered. Positions 495-520 (VEKKKPEVAESSKSGDEAEKKEETAA) are enriched in basic and acidic residues. Serine 508 carries the post-translational modification Phosphoserine. The span at 521 to 530 (PRKRQPRRDN) shows a compositional bias: basic residues.

This sequence belongs to the calreticulin family.

The protein localises to the endoplasmic reticulum membrane. In terms of biological role, calcium-binding protein that interacts with newly synthesized monoglucosylated glycoproteins in the endoplasmic reticulum. It may act in assisting protein assembly and/or in the retention within the ER of unassembled protein subunits. It seems to play a major role in the quality control apparatus of the ER by the retention of incorrectly folded proteins. The sequence is that of Calnexin homolog 1 (CNX1) from Arabidopsis thaliana (Mouse-ear cress).